The primary structure comprises 131 residues: Cytochrome c-552 (131 aa).

The heme c site is built by Cys-11, Cys-14, His-15, and Met-69.

In terms of processing, binds 1 heme c group covalently per subunit.

Its function is as follows. This monoheme basic protein appears to function as an electron donor to cytochrome oxidase in T.thermophilus. The chain is Cytochrome c-552 (cycA) from Thermus thermophilus.